The chain runs to 77 residues: MKADILQHKLVPEHTILSEEEAQKVLDDLNVRLDQIPKILPTDPVVKAIDAKVGDILKITRKSETAGIFVAYRVVRD.

It belongs to the archaeal Rpo5/eukaryotic RPB5 RNA polymerase subunit family. Part of the RNA polymerase complex.

The protein localises to the cytoplasm. It carries out the reaction RNA(n) + a ribonucleoside 5'-triphosphate = RNA(n+1) + diphosphate. Its function is as follows. DNA-dependent RNA polymerase (RNAP) catalyzes the transcription of DNA into RNA using the four ribonucleoside triphosphates as substrates. This chain is DNA-directed RNA polymerase subunit Rpo5, found in Methanosphaera stadtmanae (strain ATCC 43021 / DSM 3091 / JCM 11832 / MCB-3).